The primary structure comprises 568 residues: MCLYTRVLILHYHLLPLYGPLYHPRPLPLHSILVYMVHIIICGHYIILFLRNVNVFPIFLQMALWRPSDNTVYLPPPSVARVVNTDDYVTPTSIFYHAGSSRLLTVGNPYFRVPAGGGNKQDIPKVSAYQYRVFRVQLPDPNKFGLPDTSIYNPETQRLVWACAGVEIGRGQPLGVGLSGHPFYNKLDDTESSHAATSNVSEDVRDNVSVDYKQTQLCILGCAPAIGEHWAKGTACKSRPLSQGDCPPLELKNTVLEDGDMVDTGYGAMDFSTLQDTKCEVPLDICQSICKYPDYLQMSADPYGDSMFFCLRREQLFARHFWNRAGTMGDTVPQSLYIKGTGMPASPGSCVYSPSPSGSIVTSDSQLFNKPYWLHKAQGHNNGVCWHNQLFVTVVDTTPSTNLTICASTQSPVPGQYDATKFKQYSRHVEEYDLQFIFQLCTITLTADVMSYIHSMNSSILEDWNFGVPPPPTTSLVDTYRFVQSVAITCQKDAAPAENKDPYDKLKFWNVDLKEKFSLDLDQYPLGRKFLVQAGLRRKPTIGPRKRSAPSATTSSKPAKRVRVRARK.

Basic residues-rich tracts occupy residues 537–548 (RRKPTIGPRKRS) and 558–568 (PAKRVRVRARK). Residues 537–568 (RRKPTIGPRKRSAPSATTSSKPAKRVRVRARK) are disordered.

It belongs to the papillomaviridae L1 protein family. As to quaternary structure, self-assembles into homopentamers. The capsid has an icosahedral symmetry and consists of 72 capsomers, with each capsomer being a pentamer of L1. Interacts with the minor capsid protein L2; this interaction is necessary for viral genome encapsidation. Interacts with protein E2; this interaction enhances E2-dependent replication and transcription activation.

It localises to the virion. The protein localises to the host nucleus. Its function is as follows. Forms an icosahedral capsid with a T=7 symmetry and a 50 nm diameter. The capsid is composed of 72 pentamers linked to each other by disulfide bonds and associated with L2 proteins. Binds to heparan sulfate proteoglycans on cell surface of basal layer keratinocytes to provide initial virion attachment. This binding mediates a conformational change in the virus capsid that facilitates efficient infection. The virion enters the host cell via endocytosis. During virus trafficking, L1 protein dissociates from the viral DNA and the genomic DNA is released to the host nucleus. The virion assembly takes place within the cell nucleus. Encapsulates the genomic DNA together with protein L2. The protein is Major capsid protein L1 of Human papillomavirus type 18.